The chain runs to 432 residues: Adenylosuccinate synthetase (432 aa).

GTP is bound by residues 11-17 (GDEGKGK) and 39-41 (GHT). The active-site Proton acceptor is Asp-12. Residues Asp-12 and Gly-39 each coordinate Mg(2+). Residues 12–15 (DEGK), 37–40 (NAGH), Thr-134, Arg-148, Asn-230, Thr-245, and Arg-309 each bind IMP. The Proton donor role is filled by His-40. 305 to 311 (VTTGRKR) is a binding site for substrate. Residues Arg-311, 337–339 (KLD), and 419–421 (GTG) each bind GTP.

This sequence belongs to the adenylosuccinate synthetase family. Homodimer. Requires Mg(2+) as cofactor.

It localises to the cytoplasm. The enzyme catalyses IMP + L-aspartate + GTP = N(6)-(1,2-dicarboxyethyl)-AMP + GDP + phosphate + 2 H(+). It participates in purine metabolism; AMP biosynthesis via de novo pathway; AMP from IMP: step 1/2. Plays an important role in the de novo pathway and in the salvage pathway of purine nucleotide biosynthesis. Catalyzes the first committed step in the biosynthesis of AMP from IMP. The polypeptide is Adenylosuccinate synthetase (Candida glabrata (strain ATCC 2001 / BCRC 20586 / JCM 3761 / NBRC 0622 / NRRL Y-65 / CBS 138) (Yeast)).